The following is a 70-amino-acid chain: Large ribosomal subunit protein bL31 (70 aa).

Cysteine 16, cysteine 18, cysteine 37, and cysteine 40 together coordinate Zn(2+).

It belongs to the bacterial ribosomal protein bL31 family. Type A subfamily. In terms of assembly, part of the 50S ribosomal subunit. Requires Zn(2+) as cofactor.

Binds the 23S rRNA. The protein is Large ribosomal subunit protein bL31 of Shewanella denitrificans (strain OS217 / ATCC BAA-1090 / DSM 15013).